The following is an 836-amino-acid chain: Exonuclease 1 (836 aa).

Positions 1–99 (MGIQGLLPQL…TKRERSRKEN (99 aa)) are N-domain. Mg(2+)-binding residues include aspartate 30 and aspartate 78. The disordered stretch occupies residues 82 to 108 (LPMKGDQETKRERSRKENLERAKEHES). The span at 84 to 108 (MKGDQETKRERSRKENLERAKEHES) shows a compositional bias: basic and acidic residues. The tract at residues 138–230 (KQEKVDYIVA…ILSGCDYLPS (93 aa)) is I-domain. Mg(2+)-binding residues include glutamate 150, aspartate 152, aspartate 171, aspartate 173, and aspartate 226. Disordered regions lie at residues 464-488 (RDDSASVSPQCSHDIGSDPAEDPDI), 568-641 (EDEC…TNSE), and 744-836 (TASA…TSRS). A compositionally biased stretch (acidic residues) spans 568 to 577 (EDECHDEDNC). 2 stretches are compositionally biased toward polar residues: residues 578-592 (ETGNYTLPGDQQRSS) and 744-758 (TASAHSDQGKITSKA).

The protein belongs to the XPG/RAD2 endonuclease family. EXO1 subfamily. Mg(2+) serves as cofactor.

The protein localises to the nucleus. In terms of biological role, putative 5'-&gt;3' double-stranded DNA exonuclease which may also contain a cryptic 3'-&gt;5' double-stranded DNA exonuclease activity. May be involved in DNA mismatch repair (MMR). The chain is Exonuclease 1 (EXO1) from Oryza sativa subsp. japonica (Rice).